Here is a 656-residue protein sequence, read N- to C-terminus: MSKFLDMLSGSQCVSLEKCGDVVVSTNDCMIALYCHFCRDLFTQLPEFLRHLQSNHSDVLHFTKEHNVYSVEELLSGEQDKAHEDAQSAGHNSSSGDSRSLMNSEDSRAIDGSEENSDNSPVKPEQIGKQNEINLLAEVTNILLQTNDKERINDELKPESGVFKGARKKANNESSSLKICDLKSHTIARTSRKRMSLVKNHILRVLDRDLSAKLEMKPLEPNSKLPITEPIQEDNIPGTCFQTPPKPIPSLSQLSVRKSSLTEANHICTKYATNKTAPTVPKLLNNVPKSILTSQQAQVNSDSSEINETYHISEAGSQVTKTTKSFPVKINQIEILQPLKLPKTLITPINEEGVSDQMENSTKNINNAQRKKENPKKFFKKPSELGIKTQGSPNKFLNIIKSKANPIIVNRVQTTSAKASTNKIQIRFNDKTKGFASEFNSTKIRKLKMENCVDLKTEDPCDNTNMRLNKMATIGSCEILKAVGLPAITDNAIEAIMLLPDELETMRKKADQFTKIYRKYDSIWNYRKIFPPAKPDFISQKIFALTREVNKTMLCNLANSDIKGIINQISVWHYNIYTQYIDLDTISEIARYTLKVFSFLPVSFAYFCKCCDDIFILKKEYLKHLISHQVRFQCTKCIKVFKYKGYYEKHLRNAHP.

The C2H2-type 1 zinc-finger motif lies at Leu33–His56. The tract at residues Asp80–Asn131 is disordered. Positions Ala89–Ser104 are enriched in polar residues. 2 C2H2-type zinc fingers span residues Tyr606–His628 and Phe632–His655.

The protein belongs to the Teflon family.

Its subcellular location is the nucleus. It is found in the chromosome. Its function is as follows. Specifically required in males for proper segregation of autosomal bivalents at meiosis I. Expression is required in the male germ line prior to spermatocyte stage S4. May have a role as a bridging molecule maintaining adhesion to hold autosome bivalents together via heterochromatic connections. In Drosophila sechellia (Fruit fly), this protein is Protein teflon.